The sequence spans 529 residues: Delayed-rectifier potassium channel regulatory subunit KCNS1 (529 aa).

Residues 1 to 217 lie on the Cytoplasmic side of the membrane; the sequence is MLMLLVRGTR…LTMENPGYSL (217 aa). The helical transmembrane segment at 218–239 threads the bilayer; the sequence is PSKLFSCVSISVVLASIAAMCI. Topologically, residues 240 to 270 are extracellular; it reads HSLPEYQAREAAAAVAAVAAGRSPEGVRDDP. The chain crosses the membrane as a helical span at residues 271 to 293; that stretch reads VLRRLEYFCIAWFSFEVSSRLLL. Residues 294 to 304 lie on the Cytoplasmic side of the membrane; that stretch reads APSTRNFFCHP. Residues 305-322 traverse the membrane as a helical segment; that stretch reads LNLIDIVSVLPFYLTLLA. Over 323–340 the chain is Extracellular; that stretch reads GVALGDQGGTGGKELGHL. The helical; Voltage-sensor transmembrane segment at 341 to 361 threads the bilayer; sequence GKVVQVFRLMRIFRVLKLARH. At 362–376 the chain is on the cytoplasmic side; the sequence is STGLRSLGATLKHSY. Residues 377-398 traverse the membrane as a helical segment; the sequence is REVGILLLYLAVGVSVFSGVAY. Over 399–411 the chain is Extracellular; the sequence is TAEKEEDVGFNTI. An intramembrane region (helical) is located at residues 412 to 423; that stretch reads PACWWWGTVSMT. The Selectivity filter motif lies at 424–429; it reads TVGYGD. An intramembrane segment occupies 424–431; sequence TVGYGDVV. Topologically, residues 432-438 are extracellular; that stretch reads PVTVAGK. A helical membrane pass occupies residues 439–467; it reads LAASGCILGGILVVALPITIIFNKFSHFY. The Cytoplasmic portion of the chain corresponds to 468–529; the sequence is RRQKALEAAV…PSEPPHPQMY (62 aa). Residues 500–529 form a disordered region; sequence LETSREISQEGRSADLETQAPSEPPHPQMY. Residues 502–514 are compositionally biased toward basic and acidic residues; sequence TSREISQEGRSAD.

This sequence belongs to the potassium channel family. S (TC 1.A.1.2) subfamily. Kv9.1/KCNS1 sub-subfamily. Heterotetramer with KCNB1. Heterotetramer with KCNB2. Does not form homomultimers.

It is found in the cell membrane. Functionally, potassium channel regulatory subunit that modulate the delayed rectifier voltage-gated potassium channel activity of KCNB1 and KCNB2 by altering their kinetics, expression levels, and shifting the half-inactivation potential to more polarized values. While it does not form functional channels on its own, it can form functional heterotetrameric channels with KCNB1 and KCNB2. Each regulatory subunit has unique regulatory properties that can lead to extensive inhibition, significant changes in kinetics, and/or substantial shifts in the voltage dependencies of the inactivation process. The sequence is that of Delayed-rectifier potassium channel regulatory subunit KCNS1 from Colobus guereza (Mantled guereza).